Consider the following 374-residue polypeptide: Translocating chain-associated membrane protein 1 (374 aa).

Over 1 to 29 the chain is Cytoplasmic; the sequence is MAIRKKSNKNPPLLSHEFLLQNHADIVSC. Residues 30-50 form a helical membrane-spanning segment; sequence LAMLFLLGLMFEVTAKGAIIF. Residues 51 to 76 lie on the Lumenal side of the membrane; the sequence is VALQYNVTRPATEEQATESASLYHYG. N-linked (GlcNAc...) asparagine glycosylation occurs at asparagine 56. Residues 77 to 97 form a helical membrane-spanning segment; sequence IKDLATVLFYMLVAIIIHAII. Topologically, residues 98 to 121 are cytoplasmic; the sequence is QEYVLDKINRRMHFSKTKHSKFNE. In terms of domain architecture, TLC spans 117–326; the sequence is SKFNESGQLS…NFQLRRWREH (210 aa). The helical transmembrane segment at 122–142 threads the bilayer; sequence SGQLSAFYLFACVWGTFILIS. The Lumenal segment spans residues 143–159; it reads ENYISDPTILWRAYPHN. A helical transmembrane segment spans residues 160–180; sequence LMTFQTKFFYISQLAYWLHAF. Residues 181 to 192 lie on the Cytoplasmic side of the membrane; the sequence is PELYFQKTKKED. Residues 193 to 213 traverse the membrane as a helical segment; the sequence is IPRQLVYIGLYLFHIAGAYLL. Topologically, residues 214–217 are lumenal; the sequence is NLNH. Residues 218–238 traverse the membrane as a helical segment; it reads LGLVLLVLHYFVEFLFHISRL. At 239-251 the chain is on the cytoplasmic side; it reads FYFSDEKYQKGFS. A helical transmembrane segment spans residues 252 to 272; it reads LWAVLFVLGRLLTLILSVLTV. The Lumenal portion of the chain corresponds to 273–297; the sequence is GFGLARAENQKLDFSTGNFNVLAVR. A helical membrane pass occupies residues 298-318; that stretch reads IAVLASICITQAFMMWKFINF. Residues 319 to 374 lie on the Cytoplasmic side of the membrane; that stretch reads QLRRWREHSAFQAPPVKRKPAVTKGRSSRKGTENGVNGTVTSNGADSPRNRKEKSS. The segment at 333-374 is disordered; it reads PVKRKPAVTKGRSSRKGTENGVNGTVTSNGADSPRNRKEKSS. The segment covering 334–347 has biased composition (basic residues); it reads VKRKPAVTKGRSSR. Residues 352-363 are compositionally biased toward polar residues; that stretch reads NGVNGTVTSNGA. Serine 365 is modified (phosphoserine).

The protein belongs to the TRAM family. Interacts with SEC61B. May interact with Derlin-1/DERL1. N-glycosylated.

The protein resides in the endoplasmic reticulum membrane. In terms of biological role, involved in the translocation of nascent protein chains into or through the endoplasmic reticulum (ER) membrane by facilitating the proper chain positioning at the SEC61 channel. Regulates the exposure of nascent secretory protein chain to the cytosol during translocation into the ER. May affect the phospholipid bilayer in the vicinity of the lateral gate of the SEC61 channel, thereby facilitating ER protein transport. Intimately associates with transmembrane (TM) domain of nascent membrane proteins during the entire integration process into the ER membrane. Associates with the second TM domain of G-protein-coupled receptor opsin/OPSD nascent chain in the ER membrane, which may facilitate its integration into the membrane. Under conditions of ER stress, participates in the disposal of misfolded ER membrane proteins during the unfolded protein response (UPR), an integrated stress response (ISR) pathway, by selectively retrotranslocating misfolded ER-membrane proteins from the ER into the cytosol where they are ubiquitinated and degraded by the proteasome. The polypeptide is Translocating chain-associated membrane protein 1 (Mus musculus (Mouse)).